The following is a 437-amino-acid chain: UDP-N-acetylmuramate--L-alanine ligase (437 aa).

114–120 (GTHGKTS) serves as a coordination point for ATP.

It belongs to the MurCDEF family.

It is found in the cytoplasm. The enzyme catalyses UDP-N-acetyl-alpha-D-muramate + L-alanine + ATP = UDP-N-acetyl-alpha-D-muramoyl-L-alanine + ADP + phosphate + H(+). It participates in cell wall biogenesis; peptidoglycan biosynthesis. Cell wall formation. This is UDP-N-acetylmuramate--L-alanine ligase from Lactobacillus gasseri (strain ATCC 33323 / DSM 20243 / BCRC 14619 / CIP 102991 / JCM 1131 / KCTC 3163 / NCIMB 11718 / NCTC 13722 / AM63).